Reading from the N-terminus, the 64-residue chain is Large ribosomal subunit protein uL1 (64 aa).

This sequence belongs to the universal ribosomal protein uL1 family. In terms of assembly, part of the 50S ribosomal subunit.

Binds directly to 23S rRNA. The L1 stalk is quite mobile in the ribosome, and is involved in E site tRNA release. In terms of biological role, protein L1 is also a translational repressor protein, it controls the translation of the L11 operon by binding to its mRNA. In Streptomyces lavendulae, this protein is Large ribosomal subunit protein uL1 (rplA).